We begin with the raw amino-acid sequence, 521 residues long: Probable cytosol aminopeptidase (521 aa).

Residues K268 and D273 each coordinate Mn(2+). K280 is a catalytic residue. Residues D291, D350, and E352 each contribute to the Mn(2+) site. The active site involves R354.

The protein belongs to the peptidase M17 family. It depends on Mn(2+) as a cofactor.

The protein resides in the cytoplasm. It carries out the reaction Release of an N-terminal amino acid, Xaa-|-Yaa-, in which Xaa is preferably Leu, but may be other amino acids including Pro although not Arg or Lys, and Yaa may be Pro. Amino acid amides and methyl esters are also readily hydrolyzed, but rates on arylamides are exceedingly low.. It catalyses the reaction Release of an N-terminal amino acid, preferentially leucine, but not glutamic or aspartic acids.. In terms of biological role, presumably involved in the processing and regular turnover of intracellular proteins. Catalyzes the removal of unsubstituted N-terminal amino acids from various peptides. In Chromobacterium violaceum (strain ATCC 12472 / DSM 30191 / JCM 1249 / CCUG 213 / NBRC 12614 / NCIMB 9131 / NCTC 9757 / MK), this protein is Probable cytosol aminopeptidase.